A 307-amino-acid chain; its full sequence is Dihydroorotate dehydrogenase A (fumarate) (307 aa).

FMN-binding positions include serine 21 and 46–47 (KT). Substrate contacts are provided by residues lysine 46, 70-74 (NSVGL), and asparagine 130. Asparagine 130 provides a ligand contact to FMN. The Nucleophile role is filled by cysteine 133. Residues lysine 168 and isoleucine 194 each coordinate FMN. Residue 195-196 (NT) participates in substrate binding. FMN-binding positions include glycine 220, 246 to 247 (GG), and 268 to 269 (GS).

It belongs to the dihydroorotate dehydrogenase family. Type 1 subfamily. As to quaternary structure, homodimer. FMN is required as a cofactor.

It localises to the cytoplasm. The enzyme catalyses (S)-dihydroorotate + fumarate = orotate + succinate. Its pathway is pyrimidine metabolism; UMP biosynthesis via de novo pathway. Its function is as follows. Catalyzes the conversion of dihydroorotate to orotate with fumarate as the electron acceptor. The chain is Dihydroorotate dehydrogenase A (fumarate) (pyrD) from Lactobacillus helveticus (strain DPC 4571).